Reading from the N-terminus, the 438-residue chain is Ribosomal protein uS12 methylthiotransferase RimO (438 aa).

Residues 5–116 (PTIAISHLGC…IVQVIQRVEN (112 aa)) form the MTTase N-terminal domain. Positions 14, 50, 79, 154, 158, and 161 each coordinate [4Fe-4S] cluster. The 230-residue stretch at 140 to 369 (TTSEGVAYLR…MQIQQPISLQ (230 aa)) folds into the Radical SAM core domain. Residues 372–438 (CACIGDIVDV…IYDLYGEVIN (67 aa)) enclose the TRAM domain.

The protein belongs to the methylthiotransferase family. RimO subfamily. [4Fe-4S] cluster is required as a cofactor.

The protein resides in the cytoplasm. The enzyme catalyses L-aspartate(89)-[ribosomal protein uS12]-hydrogen + (sulfur carrier)-SH + AH2 + 2 S-adenosyl-L-methionine = 3-methylsulfanyl-L-aspartate(89)-[ribosomal protein uS12]-hydrogen + (sulfur carrier)-H + 5'-deoxyadenosine + L-methionine + A + S-adenosyl-L-homocysteine + 2 H(+). In terms of biological role, catalyzes the methylthiolation of an aspartic acid residue of ribosomal protein uS12. This is Ribosomal protein uS12 methylthiotransferase RimO from Gloeothece citriformis (strain PCC 7424) (Cyanothece sp. (strain PCC 7424)).